Here is a 465-residue protein sequence, read N- to C-terminus: tRNA modification GTPase MnmE (465 aa).

(6S)-5-formyl-5,6,7,8-tetrahydrofolate is bound by residues Arg-30, Glu-92, and Arg-132. Residues 227–388 (GLQVALVGRP…LIEAVLKTCG (162 aa)) form the TrmE-type G domain. K(+) is bound at residue Asn-237. GTP contacts are provided by residues 237-242 (NVGKSS), 256-262 (TDLPGTT), 281-284 (DTAG), and 342-345 (NKAD). Ser-241 serves as a coordination point for Mg(2+). Thr-256, Leu-258, and Thr-261 together coordinate K(+). Residue Thr-262 coordinates Mg(2+). (6S)-5-formyl-5,6,7,8-tetrahydrofolate is bound at residue Lys-465.

It belongs to the TRAFAC class TrmE-Era-EngA-EngB-Septin-like GTPase superfamily. TrmE GTPase family. As to quaternary structure, homodimer. Heterotetramer of two MnmE and two MnmG subunits. Requires K(+) as cofactor.

Its subcellular location is the cytoplasm. Exhibits a very high intrinsic GTPase hydrolysis rate. Involved in the addition of a carboxymethylaminomethyl (cmnm) group at the wobble position (U34) of certain tRNAs, forming tRNA-cmnm(5)s(2)U34. The sequence is that of tRNA modification GTPase MnmE from Prochlorococcus marinus (strain MIT 9303).